Consider the following 68-residue polypeptide: Defensin gallicin (68 aa).

An N-terminal signal peptide occupies residues 1-16 (MWIESDAGVAIDRHAR).

Contains 5 disulfide bonds. In terms of tissue distribution, expressed in hemolymph, gills, digestive gland, foot, adductor muscles and mantle.

The protein resides in the secreted. The protein localises to the target cell membrane. In terms of biological role, shows antibacterial activity against numerous Gram-positive bacteria. It selectively inhibits peptidoglycan biosynthesis through complex formation with the cell wall precursor lipid II (1:1 molar ratio) thus inhibiting cell wall synthesis. The chain is Defensin gallicin from Mytilus galloprovincialis (Mediterranean mussel).